The chain runs to 178 residues: MTKKEQALIEQYAKSLVEVASEHHSLDTLQADVLAILETFETTNLDQSLSSLAVPHAEKIKLLTLLKGNNSVYMNNFLNLILQNEREAYLYQMLQAVLNEIAIVSNQYDVTVTSSLPLTEEQKSRVRAVVAKKFAVTAGRLIEKVDPSLIGGFIISVNNKVIDTSIRRQLQAFKMNLK.

This sequence belongs to the ATPase delta chain family. In terms of assembly, F-type ATPases have 2 components, F(1) - the catalytic core - and F(0) - the membrane proton channel. F(1) has five subunits: alpha(3), beta(3), gamma(1), delta(1), epsilon(1). F(0) has three main subunits: a(1), b(2) and c(10-14). The alpha and beta chains form an alternating ring which encloses part of the gamma chain. F(1) is attached to F(0) by a central stalk formed by the gamma and epsilon chains, while a peripheral stalk is formed by the delta and b chains.

The protein localises to the cell membrane. F(1)F(0) ATP synthase produces ATP from ADP in the presence of a proton or sodium gradient. F-type ATPases consist of two structural domains, F(1) containing the extramembraneous catalytic core and F(0) containing the membrane proton channel, linked together by a central stalk and a peripheral stalk. During catalysis, ATP synthesis in the catalytic domain of F(1) is coupled via a rotary mechanism of the central stalk subunits to proton translocation. Its function is as follows. This protein is part of the stalk that links CF(0) to CF(1). It either transmits conformational changes from CF(0) to CF(1) or is implicated in proton conduction. The chain is ATP synthase subunit delta from Streptococcus pyogenes serotype M3 (strain SSI-1).